Reading from the N-terminus, the 243-residue chain is Proteasome subunit beta (243 aa).

Residues 1 to 49 (MRTPTGDLSDGPAEELGRDQPVFGPEIGEFEHSERRAAQADGEGEMKTG) constitute a propeptide, removed in mature form; by autocatalysis. Positions 1-50 (MRTPTGDLSDGPAEELGRDQPVFGPEIGEFEHSERRAAQADGEGEMKTGT) are disordered. Residues 29–38 (EFEHSERRAA) are compositionally biased toward basic and acidic residues. The Nucleophile role is filled by T50.

Belongs to the peptidase T1B family. The 20S proteasome core is composed of 14 alpha and 14 beta subunits that assemble into four stacked heptameric rings, resulting in a barrel-shaped structure. The two inner rings, each composed of seven catalytic beta subunits, are sandwiched by two outer rings, each composed of seven alpha subunits. The catalytic chamber with the active sites is on the inside of the barrel. Has a gated structure, the ends of the cylinder being occluded by the N-termini of the alpha-subunits. Is capped at one or both ends by the proteasome regulatory ATPase, PAN.

The protein resides in the cytoplasm. It carries out the reaction Cleavage of peptide bonds with very broad specificity.. With respect to regulation, the formation of the proteasomal ATPase PAN-20S proteasome complex, via the docking of the C-termini of PAN into the intersubunit pockets in the alpha-rings, triggers opening of the gate for substrate entry. Interconversion between the open-gate and close-gate conformations leads to a dynamic regulation of the 20S proteasome proteolysis activity. Functionally, component of the proteasome core, a large protease complex with broad specificity involved in protein degradation. The protein is Proteasome subunit beta of Halorubrum lacusprofundi (strain ATCC 49239 / DSM 5036 / JCM 8891 / ACAM 34).